Here is an 82-residue protein sequence, read N- to C-terminus: Quinohemoprotein amine dehydrogenase subunit gamma (82 aa).

The segment at residues 7–16 is a cross-link (4-cysteinyl-glutamic acid (Cys-Glu)); the sequence is CTTSFDPGWE. 2 consecutive cross-links (3-cysteinyl-aspartic acid (Cys-Asp)) follow at residues 27–33 and 41–49; these read CQPMEAD and CWWPAQVAD. Catalysis depends on Asp-33, which acts as the Proton acceptor. The 4'-cysteinyl-tryptophylquinone (Cys-Trp) cross-link spans 37–43; the sequence is CADPCWW. Residue Trp-43 is modified to Tryptophylquinone.

It belongs to the quinohemoprotein amine dehydrogenase subunit gamma family. In terms of assembly, heterotrimer of an alpha, a beta and a gamma subunit. Cysteine tryptophylquinone residue is required as a cofactor. Post-translationally, the cysteine tryptophylquinone (CTQ) is generated by oxidation of the indole ring of a tryptophan residue to form tryptophylquinone, followed by covalent cross-linking with a cysteine residue.

Its subcellular location is the periplasm. The catalysed reaction is 2 Fe(III)-[cytochrome c550] + an aliphatic amine + H2O = 2 Fe(II)-[cytochrome c550] + an aldehyde + NH4(+) + 2 H(+). With respect to regulation, inhibited by carbonyl reagents such as hydrazine, hydroxylamine, phenylhydrazine and semicarbazide. Functionally, catalyzes the oxidative deamination of a wide range of primary aliphatic and aromatic amines. The physiological electron acceptor is the constitutive cytochrome c550. This is Quinohemoprotein amine dehydrogenase subunit gamma (qhnDH) from Paracoccus denitrificans.